The chain runs to 277 residues: MELWFTENQDENLRFSLKVKETLVVEKTPYQHLAILDTYQFGRVLTLDGILQTTEKDEFVYHEMIVHVPLFTHKNPKSVLIVGGGDGGSVREVLKHPSVERVVLAEIDEAVVRNSKKYLPTISQALDDPRVEIMIGDGIKYVNEHKNEFDVVIVDSTDPIGPAVGLFTSDFYKAVYECLKEDGIIVAQTESPFIYGKLINKLSKMFKEIYPITKAYIATIPTYPGSLWTFTMGSKKYDPEEVDINSIPRIDTKYYTPEIHKAAFVLPKFVKDIFDEV.

The 234-residue stretch at 2 to 235 (ELWFTENQDE…SLWTFTMGSK (234 aa)) folds into the PABS domain. Gln-31 contributes to the S-methyl-5'-thioadenosine binding site. Residues His-62 and Asp-86 each coordinate spermidine. S-methyl-5'-thioadenosine contacts are provided by residues Glu-106 and 137-138 (DG). The active-site Proton acceptor is Asp-155. 155 to 158 (DSTD) lines the spermidine pocket. Pro-162 contributes to the S-methyl-5'-thioadenosine binding site.

This sequence belongs to the spermidine/spermine synthase family. In terms of assembly, homodimer or homotetramer.

It localises to the cytoplasm. It catalyses the reaction S-adenosyl 3-(methylsulfanyl)propylamine + putrescine = S-methyl-5'-thioadenosine + spermidine + H(+). It participates in amine and polyamine biosynthesis; spermidine biosynthesis; spermidine from putrescine: step 1/1. Catalyzes the irreversible transfer of a propylamine group from the amino donor S-adenosylmethioninamine (decarboxy-AdoMet) to putrescine (1,4-diaminobutane) to yield spermidine. This chain is Polyamine aminopropyltransferase, found in Thermoanaerobacter pseudethanolicus (strain ATCC 33223 / 39E) (Clostridium thermohydrosulfuricum).